The chain runs to 174 residues: ATP-dependent protease subunit HslV (174 aa).

Thr2 is a catalytic residue. 3 residues coordinate Na(+): Gly157, Asp160, and Thr163.

It belongs to the peptidase T1B family. HslV subfamily. As to quaternary structure, a double ring-shaped homohexamer of HslV is capped on each side by a ring-shaped HslU homohexamer. The assembly of the HslU/HslV complex is dependent on binding of ATP.

The protein resides in the cytoplasm. It catalyses the reaction ATP-dependent cleavage of peptide bonds with broad specificity.. With respect to regulation, allosterically activated by HslU binding. Its function is as follows. Protease subunit of a proteasome-like degradation complex believed to be a general protein degrading machinery. This chain is ATP-dependent protease subunit HslV, found in Aliivibrio fischeri (strain MJ11) (Vibrio fischeri).